A 299-amino-acid polypeptide reads, in one-letter code: Glutamate formimidoyltransferase (299 aa).

His-82 (for formimidoyltransferase activity) is an active-site residue. Residue 163-172 (GDRKIHPTAG) participates in folate binding.

The protein belongs to the formiminotransferase family.

The protein resides in the cytoplasm. It carries out the reaction (6S)-5-formyl-5,6,7,8-tetrahydrofolate + L-glutamate = N-formyl-L-glutamate + (6S)-5,6,7,8-tetrahydrofolate + H(+). The catalysed reaction is 5-formimidoyltetrahydrofolate + L-glutamate = N-formimidoyl-L-glutamate + (6S)-5,6,7,8-tetrahydrofolate. It catalyses the reaction (6S)-5-formyl-5,6,7,8-tetrahydrofolate + ATP = (6R)-5,10-methenyltetrahydrofolate + ADP + phosphate. It functions in the pathway amino-acid degradation; L-histidine degradation into L-glutamate; L-glutamate from N-formimidoyl-L-glutamate (transferase route): step 1/1. The protein operates within one-carbon metabolism; tetrahydrofolate interconversion. Its function is as follows. Catalyzes the transfer of the formyl group from N-formylglutamate to tetrahydrofolate (THF) to yield 5-formyltetrahydrofolate (5-CHO-THF) and glutamate (Glu). The triglutamate form of 5-CHO-THF (5-CHO-THF-Glu3) can also be used as substrate. It can also catalyze the transfer of the formimino group from N-formiminoglutamate to tetrahydrofolate (THF) to yield 5-formiminotetrahydrofolate (5-NH=CH-THF) and glutamate (Glu). It can replace YgfA to catalyze the irreversible ATP-dependent transformation of 5-CHO-THF to form 5,10-methenyltetrahydrofolate (5,10-CH=THF). In Streptococcus pyogenes serotype M1, this protein is Glutamate formimidoyltransferase.